A 399-amino-acid chain; its full sequence is Dihydrolipoyllysine-residue succinyltransferase component of 2-oxoglutarate dehydrogenase complex (399 aa).

The region spanning 2–77 is the Lipoyl-binding domain; it reads AIDIKAPTFP…LSGELLGKLT (76 aa). Residue K43 is modified to N6-lipoyllysine. The Peripheral subunit-binding (PSBD) domain occupies 104 to 141; that stretch reads ILSPAARKIAEENAIAADSITGTGKGGRVTKEDAVAAA. Active-site residues include H370 and D374.

It belongs to the 2-oxoacid dehydrogenase family. Forms a 24-polypeptide structural core with octahedral symmetry. Part of the 2-oxoglutarate dehydrogenase (OGDH) complex composed of E1 (2-oxoglutarate dehydrogenase), E2 (dihydrolipoamide succinyltransferase) and E3 (dihydrolipoamide dehydrogenase); the complex contains multiple copies of the three enzymatic components (E1, E2 and E3). Requires (R)-lipoate as cofactor.

It carries out the reaction N(6)-[(R)-dihydrolipoyl]-L-lysyl-[protein] + succinyl-CoA = N(6)-[(R)-S(8)-succinyldihydrolipoyl]-L-lysyl-[protein] + CoA. Its pathway is amino-acid degradation; L-lysine degradation via saccharopine pathway; glutaryl-CoA from L-lysine: step 6/6. Its function is as follows. E2 component of the 2-oxoglutarate dehydrogenase (OGDH) complex which catalyzes the second step in the conversion of 2-oxoglutarate to succinyl-CoA and CO(2). This is Dihydrolipoyllysine-residue succinyltransferase component of 2-oxoglutarate dehydrogenase complex (sucB) from Azotobacter vinelandii.